Here is a 375-residue protein sequence, read N- to C-terminus: Dual specificity protein phosphatase 4 (375 aa).

The region spanning 25–143 (SGGRCLLLDC…FASEYPEFCA (119 aa)) is the Rhodanese domain. The Tyrosine-protein phosphatase domain maps to 176 to 317 (GPVEILPFLY…LLQFESQVLA (142 aa)). Cysteine 261 (phosphocysteine intermediate) is an active-site residue.

It belongs to the protein-tyrosine phosphatase family. Non-receptor class dual specificity subfamily.

The protein localises to the nucleus. It carries out the reaction O-phospho-L-tyrosyl-[protein] + H2O = L-tyrosyl-[protein] + phosphate. The enzyme catalyses O-phospho-L-seryl-[protein] + H2O = L-seryl-[protein] + phosphate. It catalyses the reaction O-phospho-L-threonyl-[protein] + H2O = L-threonyl-[protein] + phosphate. Functionally, regulates mitogenic signal transduction by dephosphorylating both Thr and Tyr residues on MAP kinases ERK1 and ERK2. The sequence is that of Dual specificity protein phosphatase 4 (DUSP4) from Gallus gallus (Chicken).